A 561-amino-acid polypeptide reads, in one-letter code: Oligo-1,6-glucosidase 1 (561 aa).

Positions 20, 22, 24, 26, and 28 each coordinate Ca(2+). The active-site Nucleophile is Asp199. Glu255 (proton donor) is an active-site residue.

It belongs to the glycosyl hydrolase 13 family.

It localises to the cytoplasm. It catalyses the reaction Hydrolysis of (1-&gt;6)-alpha-D-glucosidic linkages in some oligosaccharides produced from starch and glycogen by alpha-amylase, and in isomaltose.. Hydrolyzes various disaccharides such as sucrose, maltose, and isomaltose with different efficiencies. Also hydrolyzes longer maltodextrins from maltotriose up to maltohexaose, but not maltoheptaose, palatinose, isomaltotriose, or isomaltotetraose. The chain is Oligo-1,6-glucosidase 1 (malL) from Bacillus subtilis (strain 168).